We begin with the raw amino-acid sequence, 335 residues long: Phosphate acyltransferase (335 aa).

This sequence belongs to the PlsX family. As to quaternary structure, homodimer. Probably interacts with PlsY.

It localises to the cytoplasm. It catalyses the reaction a fatty acyl-[ACP] + phosphate = an acyl phosphate + holo-[ACP]. It participates in lipid metabolism; phospholipid metabolism. In terms of biological role, catalyzes the reversible formation of acyl-phosphate (acyl-PO(4)) from acyl-[acyl-carrier-protein] (acyl-ACP). This enzyme utilizes acyl-ACP as fatty acyl donor, but not acyl-CoA. This chain is Phosphate acyltransferase, found in Streptococcus pyogenes serotype M6 (strain ATCC BAA-946 / MGAS10394).